A 144-amino-acid chain; its full sequence is Large ribosomal subunit protein uL14 (144 aa).

The protein belongs to the universal ribosomal protein uL14 family. Part of the 50S ribosomal subunit. Forms a cluster with proteins L3 and L24e, part of which may contact the 16S rRNA in 2 intersubunit bridges.

Its function is as follows. Binds to 23S rRNA. Forms part of two intersubunit bridges in the 70S ribosome. The protein is Large ribosomal subunit protein uL14 of Caldivirga maquilingensis (strain ATCC 700844 / DSM 13496 / JCM 10307 / IC-167).